Here is a 334-residue protein sequence, read N- to C-terminus: Beta-glucanase (334 aa).

An N-terminal signal peptide occupies residues 1–27 (MKNRVISLLMASLLLVLSVIVAPFYKA). Residues 28–248 (EAATVVNTPF…YVKYYPNGVP (221 aa)) enclose the GH16 domain. The Nucleophile role is filled by Glu136. The active-site Proton donor is the Glu140. Positions 246–265 (GVPQDNPTPTPTIAPSTPTN) are disordered. Residues 267-334 (NLPLKGDVNG…RYLIRAIPSL (68 aa)) enclose the Dockerin domain.

The protein belongs to the glycosyl hydrolase 16 family.

It catalyses the reaction Hydrolysis of (1-&gt;4)-beta-D-glucosidic linkages in beta-D-glucans containing (1-&gt;3)- and (1-&gt;4)-bonds.. In Acetivibrio thermocellus (Hungateiclostridium thermocellum), this protein is Beta-glucanase (licB).